The sequence spans 92 residues: Small ribosomal subunit protein uS19 (92 aa).

The protein belongs to the universal ribosomal protein uS19 family.

Its function is as follows. Protein S19 forms a complex with S13 that binds strongly to the 16S ribosomal RNA. In Novosphingobium aromaticivorans (strain ATCC 700278 / DSM 12444 / CCUG 56034 / CIP 105152 / NBRC 16084 / F199), this protein is Small ribosomal subunit protein uS19.